A 51-amino-acid polypeptide reads, in one-letter code: Insulin-1 (51 aa).

Intrachain disulfides connect Cys-8-Cys-37, Cys-20-Cys-50, and Cys-36-Cys-41.

The protein belongs to the insulin family. Heterodimer of a B chain and an A chain linked by two disulfide bonds.

It is found in the secreted. In terms of biological role, insulin decreases blood glucose concentration. It increases cell permeability to monosaccharides, amino acids and fatty acids. It accelerates glycolysis, the pentose phosphate cycle, and glycogen synthesis in liver. This is Insulin-1 (ins1) from Batrachoididae sp. (Toadfish).